We begin with the raw amino-acid sequence, 530 residues long: GH3 domain-containing protein (530 aa).

The signal sequence occupies residues methionine 1–alanine 17. Positions leucine 99–aspartate 122 are disordered. Asparagine 450 carries an N-linked (GlcNAc...) asparagine glycan. Position 489 is an N5-methylglutamine (glutamine 489).

The protein belongs to the GH3 family. Post-translationally, methylated at Gln-489 by N6AMT1.

It is found in the endoplasmic reticulum. The protein resides in the nucleus envelope. This chain is GH3 domain-containing protein (GHDC), found in Homo sapiens (Human).